The following is a 1101-amino-acid chain: Serine/threonine-protein kinase PSK2 (1101 aa).

T118 carries the phosphothreonine modification. The 259-residue stretch at 841 to 1099 (FTILQVMGEG…IDEIYEDKWL (259 aa)) folds into the Protein kinase domain. ATP is bound by residues 847 to 855 (MGEGAYGKV) and K870. Residue D975 is the Proton acceptor of the active site.

Belongs to the protein kinase superfamily. Ser/Thr protein kinase family.

The protein localises to the cytoplasm. It carries out the reaction L-seryl-[protein] + ATP = O-phospho-L-seryl-[protein] + ADP + H(+). It catalyses the reaction L-threonyl-[protein] + ATP = O-phospho-L-threonyl-[protein] + ADP + H(+). Serine/threonine-protein kinase involved in the control of sugar metabolism and translation. Phosphorylates UGP1, which is required for normal glycogen and beta-(1,6)-glucan synthesis. This phosphorylation shifts glucose partitioning toward cell wall glucan synthesis at the expense of glycogen synthesis. Also phosphorylates the glycogen synthase GSY2 and the translation factors CAF20, TIF11 and SRO9. In Saccharomyces cerevisiae (strain ATCC 204508 / S288c) (Baker's yeast), this protein is Serine/threonine-protein kinase PSK2 (PSK2).